Reading from the N-terminus, the 156-residue chain is MSKWVYPILSIPEDKLAKAVIKNIDASVRDLYNVCKAIRGMNLKEAREFLNNVLEEKEALPFWRYSHGTSHRSNISRKWKVKSGRYPKKAIKYVLKLLDNAENNANSKGLDIDNLKIVHIAAHKGLVLKRYMTRAFGRSTRKYKYLSHIEVILGEV.

Belongs to the universal ribosomal protein uL22 family. As to quaternary structure, part of the 50S ribosomal subunit.

In terms of biological role, this protein binds specifically to 23S rRNA. It makes multiple contacts with different domains of the 23S rRNA in the assembled 50S subunit and ribosome. Its function is as follows. The globular domain of the protein is located near the polypeptide exit tunnel on the outside of the subunit, while an extended beta-hairpin is found that lines the wall of the exit tunnel in the center of the 70S ribosome. The protein is Large ribosomal subunit protein uL22 of Sulfolobus acidocaldarius (strain ATCC 33909 / DSM 639 / JCM 8929 / NBRC 15157 / NCIMB 11770).